Consider the following 334-residue polypeptide: Glyceraldehyde-3-phosphate dehydrogenase (334 aa).

NAD(+) is bound by residues 12–13 and Gly-111; that span reads TI. 140–142 lines the D-glyceraldehyde 3-phosphate pocket; it reads SCN. Cys-141 serves as the catalytic Nucleophile. NAD(+) is bound at residue Arg-167. 192–193 serves as a coordination point for D-glyceraldehyde 3-phosphate; that stretch reads HG. Gln-298 contacts NAD(+).

This sequence belongs to the glyceraldehyde-3-phosphate dehydrogenase family. In terms of assembly, homotetramer.

The protein resides in the cytoplasm. The enzyme catalyses D-glyceraldehyde 3-phosphate + phosphate + NADP(+) = (2R)-3-phospho-glyceroyl phosphate + NADPH + H(+). The catalysed reaction is D-glyceraldehyde 3-phosphate + phosphate + NAD(+) = (2R)-3-phospho-glyceroyl phosphate + NADH + H(+). Its pathway is carbohydrate degradation; glycolysis; pyruvate from D-glyceraldehyde 3-phosphate: step 1/5. The polypeptide is Glyceraldehyde-3-phosphate dehydrogenase (gap) (Pyrococcus abyssi (strain GE5 / Orsay)).